Reading from the N-terminus, the 389-residue chain is 1-acyl-sn-glycerol-3-phosphate acyltransferase 2 (389 aa).

A helical membrane pass occupies residues 2–22 (VIAAAVIVPLGLLFFISGLAV). The HXXXXD motif motif lies at 91-96 (HRSDID). The next 2 helical transmembrane spans lie at 305–325 (LAVV…FLHW) and 333–353 (KGIT…QILI). The tract at residues 357–389 (QSERSTPAKVVPAKPKDNHHPESSSQTETEKEK) is disordered. A compositionally biased stretch (basic and acidic residues) spans 370–389 (KPKDNHHPESSSQTETEKEK).

Belongs to the 1-acyl-sn-glycerol-3-phosphate acyltransferase family. In terms of assembly, interacts with GPAT9 and DGAT1. Present in roots, leaves, stems, floral buds and siliques (at protein level). Widely expressed. In contrast to LPAT1, it is not expressed at higher level in leaves.

The protein resides in the endoplasmic reticulum membrane. It carries out the reaction a 1-acyl-sn-glycero-3-phosphate + an acyl-CoA = a 1,2-diacyl-sn-glycero-3-phosphate + CoA. It participates in phospholipid metabolism; CDP-diacylglycerol biosynthesis; CDP-diacylglycerol from sn-glycerol 3-phosphate: step 2/3. Its function is as follows. Converts lysophosphatidic acid (LPA) into phosphatidic acid by incorporating acyl moiety at the 2 position. Has preference for C-18-CoA substrates compared to C-16-CoA substrates. Required for female but not male gametophyte development. In Arabidopsis thaliana (Mouse-ear cress), this protein is 1-acyl-sn-glycerol-3-phosphate acyltransferase 2 (LPAT2).